A 331-amino-acid polypeptide reads, in one-letter code: L-lactate dehydrogenase A chain (331 aa).

NAD(+)-binding positions include 29–57 (GMVG…MEDK) and arginine 98. Substrate-binding residues include arginine 105, asparagine 137, and arginine 168. Asparagine 137 serves as a coordination point for NAD(+). The Proton acceptor role is filled by histidine 192. Residue threonine 247 coordinates substrate.

This sequence belongs to the LDH/MDH superfamily. LDH family. In terms of assembly, homotetramer.

The protein localises to the cytoplasm. It carries out the reaction (S)-lactate + NAD(+) = pyruvate + NADH + H(+). The protein operates within fermentation; pyruvate fermentation to lactate; (S)-lactate from pyruvate: step 1/1. Functionally, interconverts simultaneously and stereospecifically pyruvate and lactate with concomitant interconversion of NADH and NAD(+). The polypeptide is L-lactate dehydrogenase A chain (ldha) (Notothenia angustata (Rockcod)).